Here is a 383-residue protein sequence, read N- to C-terminus: Oxysterol-binding protein-related protein 4B (383 aa).

It belongs to the OSBP family. Expressed in stems and flowers.

Its function is as follows. May be involved in the transport of sterols. The polypeptide is Oxysterol-binding protein-related protein 4B (ORP4B) (Arabidopsis thaliana (Mouse-ear cress)).